Here is a 128-residue protein sequence, read N- to C-terminus: Protein Wnt-8 (128 aa).

Ser-1 carries the O-palmitoleoyl serine lipid modification. 2 cysteine pairs are disulfide-bonded: Cys-69–Cys-109 and Cys-85–Cys-102. Asn-72 carries N-linked (GlcNAc...) asparagine glycosylation.

This sequence belongs to the Wnt family. In terms of processing, palmitoleoylation is required for efficient binding to frizzled receptors. Depalmitoleoylation leads to Wnt signaling pathway inhibition. Proteolytic processing by tiki1 and tiki2 promotes oxidation and formation of large disulfide-bond oligomers, leading to inactivation of wnt8.

Its subcellular location is the secreted. The protein resides in the extracellular space. It localises to the extracellular matrix. Ligand for members of the frizzled family of seven transmembrane receptors. Probable developmental protein. May be a signaling molecule which affects the development of discrete regions of tissues. Is likely to signal over only few cell diameters. The sequence is that of Protein Wnt-8 (WNT-8) from Evasterias troschelii (Mottled sea star).